A 618-amino-acid chain; its full sequence is DNA mismatch repair protein MutL (618 aa).

Positions 366 to 381 (AEPTAAREPATPRYSG) are enriched in low complexity. Residues 366-405 (AEPTAAREPATPRYSGGTSGGNGGRQSAGGWPHAQPGYQK) form a disordered region. The segment covering 382 to 392 (GTSGGNGGRQS) has biased composition (gly residues).

This sequence belongs to the DNA mismatch repair MutL/HexB family.

Its function is as follows. This protein is involved in the repair of mismatches in DNA. It is required for dam-dependent methyl-directed DNA mismatch repair. May act as a 'molecular matchmaker', a protein that promotes the formation of a stable complex between two or more DNA-binding proteins in an ATP-dependent manner without itself being part of a final effector complex. The polypeptide is DNA mismatch repair protein MutL (Salmonella agona (strain SL483)).